The primary structure comprises 107 residues: 4-carboxymethyl-4-methylbutenolide mutase (107 aa).

H26 (proton donor/acceptor) is an active-site residue. 2 residues coordinate 3-methylmuconolactone: H26 and Y39. 4-methylmuconolactone-binding residues include H26 and Y39.

It belongs to the MmlI family. As to quaternary structure, homodimer.

It carries out the reaction 4-methylmuconolactone = 3-methylmuconolactone. Its activity is regulated as follows. Inhibited by p-chloromercuribenzoate. Isomerase involved in the degradation of 4-methylsalicylate and 5-methylsalicylate. Catalyzes the isomerization of the dead-end metabolite 4-methylmuconolactone (4-ML) to 3-methylmuconolactone (3-ML), which can then be further degraded through a modified 3-oxoadipate pathway. Can also use 1-methylbislactone but not 3-methyl-cis,cis-muconate. This chain is 4-carboxymethyl-4-methylbutenolide mutase, found in Pseudomonas reinekei.